Consider the following 464-residue polypeptide: Endo-1,4-beta-xylanase A (464 aa).

The signal sequence occupies residues 1-33 (MFRHHPTRGRRTAGLLAAALATLSAGLTAVAPA). Residues 40–349 (TATLGELAEA…KPAYHAIAAA (310 aa)) enclose the GH10 domain. The active-site Proton donor is the Glu166. Glu271 functions as the Nucleophile in the catalytic mechanism. Positions 354 to 457 (SPAPGGNCTA…TPADVTCTPG (104 aa)) constitute a CBM2 domain.

Belongs to the glycosyl hydrolase 10 (cellulase F) family. The cofactor is Does not require any standard metal (Mg(2+), Mn2(+), Ca(2+))..

The catalysed reaction is Endohydrolysis of (1-&gt;4)-beta-D-xylosidic linkages in xylans.. It functions in the pathway glycan degradation; xylan degradation. Completely inhibited by Hg(2+), unaffected by EDTA. Its function is as follows. Contributes to hydrolysis of hemicellulose, the major component of plant cell-walls. Hydrolyzes xylan to xylose and xylobiose. The chain is Endo-1,4-beta-xylanase A (xynAS9) from Streptomyces sp.